The chain runs to 506 residues: Ribose import ATP-binding protein RbsA 2 (506 aa).

ABC transporter domains follow at residues 5–241 (LRLS…VGRR) and 254–498 (ADAP…TAGT). ATP is bound at residue 37–44 (GENGAGKS).

The protein belongs to the ABC transporter superfamily. Ribose importer (TC 3.A.1.2.1) family. In terms of assembly, the complex is composed of an ATP-binding protein (RbsA), two transmembrane proteins (RbsC) and a solute-binding protein (RbsB).

It is found in the cell inner membrane. The catalysed reaction is D-ribose(out) + ATP + H2O = D-ribose(in) + ADP + phosphate + H(+). Its function is as follows. Part of the ABC transporter complex RbsABC involved in ribose import. Responsible for energy coupling to the transport system. The polypeptide is Ribose import ATP-binding protein RbsA 2 (Burkholderia cenocepacia (strain HI2424)).